We begin with the raw amino-acid sequence, 351 residues long: Phosphoribosylformylglycinamidine cyclo-ligase (351 aa).

The protein belongs to the AIR synthase family.

The protein localises to the cytoplasm. The catalysed reaction is 2-formamido-N(1)-(5-O-phospho-beta-D-ribosyl)acetamidine + ATP = 5-amino-1-(5-phospho-beta-D-ribosyl)imidazole + ADP + phosphate + H(+). The protein operates within purine metabolism; IMP biosynthesis via de novo pathway; 5-amino-1-(5-phospho-D-ribosyl)imidazole from N(2)-formyl-N(1)-(5-phospho-D-ribosyl)glycinamide: step 2/2. This chain is Phosphoribosylformylglycinamidine cyclo-ligase, found in Lysinibacillus sphaericus (strain C3-41).